Consider the following 450-residue polypeptide: tRNA-2-methylthio-N(6)-dimethylallyladenosine synthase (450 aa).

The MTTase N-terminal domain maps to 3–119; sequence RRYYITTFGC…LGELLEQVWN (117 aa). [4Fe-4S] cluster contacts are provided by cysteine 12, cysteine 48, cysteine 82, cysteine 154, cysteine 158, and cysteine 161. Residues 140–377 enclose the Radical SAM core domain; that stretch reads RDSTVTAWVN…NHLVAKIAGD (238 aa). One can recognise a TRAM domain in the interval 380 to 444; the sequence is QRYLGREEVV…AFSLSGVPLA (65 aa).

The protein belongs to the methylthiotransferase family. MiaB subfamily. Monomer. The cofactor is [4Fe-4S] cluster.

It localises to the cytoplasm. It catalyses the reaction N(6)-dimethylallyladenosine(37) in tRNA + (sulfur carrier)-SH + AH2 + 2 S-adenosyl-L-methionine = 2-methylsulfanyl-N(6)-dimethylallyladenosine(37) in tRNA + (sulfur carrier)-H + 5'-deoxyadenosine + L-methionine + A + S-adenosyl-L-homocysteine + 2 H(+). Functionally, catalyzes the methylthiolation of N6-(dimethylallyl)adenosine (i(6)A), leading to the formation of 2-methylthio-N6-(dimethylallyl)adenosine (ms(2)i(6)A) at position 37 in tRNAs that read codons beginning with uridine. In Thermosynechococcus vestitus (strain NIES-2133 / IAM M-273 / BP-1), this protein is tRNA-2-methylthio-N(6)-dimethylallyladenosine synthase.